We begin with the raw amino-acid sequence, 189 residues long: UPF0301 protein RT0098 (189 aa).

Belongs to the UPF0301 (AlgH) family.

The chain is UPF0301 protein RT0098 from Rickettsia typhi (strain ATCC VR-144 / Wilmington).